The chain runs to 256 residues: MEAQKLSAQEIIQFIGNAEKKTGVKVTLSGMPSFKSAGFLAENGRPNFKALANKGIQVLGDFHTHYSLKIIIGDWQAVRPLLEGLTENKDYTIEFEGRNSAVPLLDTRAINARIEPGAIIRDQVTIGDNAVIMMGAIINIGAEIGEGTMIDMGAVLGGRATVGKNSHIGAGAVLAGVIEPASAEPVRVGDNVLVGANAVVIEGVQVGSGSVVAAGAIVTQDVPENVVVAGVPARIIKEIDEKTAQKTALEDALRNL.

This sequence belongs to the transferase hexapeptide repeat family. DapH subfamily.

The catalysed reaction is (S)-2,3,4,5-tetrahydrodipicolinate + acetyl-CoA + H2O = L-2-acetamido-6-oxoheptanedioate + CoA. It participates in amino-acid biosynthesis; L-lysine biosynthesis via DAP pathway; LL-2,6-diaminopimelate from (S)-tetrahydrodipicolinate (acetylase route): step 1/3. In terms of biological role, catalyzes the transfer of an acetyl group from acetyl-CoA to tetrahydrodipicolinate. The sequence is that of 2,3,4,5-tetrahydropyridine-2,6-dicarboxylate N-acetyltransferase from Lactococcus lactis subsp. cremoris (strain MG1363).